Consider the following 110-residue polypeptide: Nucleoid-associated protein Mvan_5528 (110 aa).

It belongs to the YbaB/EbfC family. In terms of assembly, homodimer.

Its subcellular location is the cytoplasm. The protein resides in the nucleoid. In terms of biological role, binds to DNA and alters its conformation. May be involved in regulation of gene expression, nucleoid organization and DNA protection. The sequence is that of Nucleoid-associated protein Mvan_5528 from Mycolicibacterium vanbaalenii (strain DSM 7251 / JCM 13017 / BCRC 16820 / KCTC 9966 / NRRL B-24157 / PYR-1) (Mycobacterium vanbaalenii).